A 347-amino-acid polypeptide reads, in one-letter code: tRNA N6-adenosine threonylcarbamoyltransferase (347 aa).

Residues His113 and His117 each coordinate Fe cation. Substrate contacts are provided by residues Ile136 to Gly140, Asp170, Gly183, Asp187, and Asn282. Asp310 contacts Fe cation.

Belongs to the KAE1 / TsaD family. Fe(2+) serves as cofactor.

The protein localises to the cytoplasm. The catalysed reaction is L-threonylcarbamoyladenylate + adenosine(37) in tRNA = N(6)-L-threonylcarbamoyladenosine(37) in tRNA + AMP + H(+). Its function is as follows. Required for the formation of a threonylcarbamoyl group on adenosine at position 37 (t(6)A37) in tRNAs that read codons beginning with adenine. Is involved in the transfer of the threonylcarbamoyl moiety of threonylcarbamoyl-AMP (TC-AMP) to the N6 group of A37, together with TsaE and TsaB. TsaD likely plays a direct catalytic role in this reaction. This is tRNA N6-adenosine threonylcarbamoyltransferase from Bifidobacterium longum (strain NCC 2705).